A 201-amino-acid chain; its full sequence is Pyridoxine/pyridoxamine 5'-phosphate oxidase (201 aa).

Residues 45-50 (RMVLLK), 65-66 (YT), Arg71, Lys72, and Gln94 contribute to the FMN site. Lys50 serves as a coordination point for substrate. Positions 112, 116, and 120 each coordinate substrate. FMN-binding positions include 129–130 (QS) and Trp174. Substrate is bound at residue 180-182 (RLH). Arg184 provides a ligand contact to FMN.

This sequence belongs to the pyridoxamine 5'-phosphate oxidase family. In terms of assembly, homodimer. FMN serves as cofactor.

It catalyses the reaction pyridoxamine 5'-phosphate + O2 + H2O = pyridoxal 5'-phosphate + H2O2 + NH4(+). It carries out the reaction pyridoxine 5'-phosphate + O2 = pyridoxal 5'-phosphate + H2O2. It functions in the pathway cofactor metabolism; pyridoxal 5'-phosphate salvage; pyridoxal 5'-phosphate from pyridoxamine 5'-phosphate: step 1/1. It participates in cofactor metabolism; pyridoxal 5'-phosphate salvage; pyridoxal 5'-phosphate from pyridoxine 5'-phosphate: step 1/1. Its function is as follows. Catalyzes the oxidation of either pyridoxine 5'-phosphate (PNP) or pyridoxamine 5'-phosphate (PMP) into pyridoxal 5'-phosphate (PLP). The chain is Pyridoxine/pyridoxamine 5'-phosphate oxidase from Rhodospirillum rubrum (strain ATCC 11170 / ATH 1.1.1 / DSM 467 / LMG 4362 / NCIMB 8255 / S1).